The following is a 135-amino-acid chain: Methylglyoxal synthase (135 aa).

An MGS-like domain is found at 1–135 (MPKRRRIALI…AQPDPKEIHA (135 aa)). Residues H12, K16, 38–41 (TGTT), and 58–59 (SG) contribute to the substrate site. D64 functions as the Proton donor/acceptor in the catalytic mechanism. Residue H91 participates in substrate binding.

This sequence belongs to the methylglyoxal synthase family.

The catalysed reaction is dihydroxyacetone phosphate = methylglyoxal + phosphate. Its function is as follows. Catalyzes the formation of methylglyoxal from dihydroxyacetone phosphate. The sequence is that of Methylglyoxal synthase from Ralstonia nicotianae (strain ATCC BAA-1114 / GMI1000) (Ralstonia solanacearum).